Reading from the N-terminus, the 346-residue chain is Putative isoaspartyl peptidase/L-asparaginase (346 aa).

Thr-207 (nucleophile) is an active-site residue. Residues 235 to 238 and 257 to 260 contribute to the substrate site; these read RVGD and TGTG.

Belongs to the Ntn-hydrolases family. Heterodimer of an alpha and beta chain produced by autocleavage. In terms of processing, cleaved into an alpha and beta chain by autocatalysis; this activates the enzyme. The N-terminal residue of the beta subunit is responsible for the nucleophile hydrolase activity.

The enzyme catalyses Cleavage of a beta-linked Asp residue from the N-terminus of a polypeptide.. It carries out the reaction L-asparagine + H2O = L-aspartate + NH4(+). In terms of biological role, has both L-asparaginase and beta-aspartyl peptidase activity. Does not have aspartylglucosaminidase activity and is inactive toward GlcNAc-L-Asn. Likewise, has no activity toward glutamine. The polypeptide is Putative isoaspartyl peptidase/L-asparaginase (Dictyostelium discoideum (Social amoeba)).